A 315-amino-acid chain; its full sequence is Vomeronasal type-1 receptor 54 (315 aa).

The Extracellular portion of the chain corresponds to 1-15 (MNKMNRLSHNTEIRN). Residues 16 to 40 (AIYSGVGIGISGNSFLLLFHIFKYI) form a helical membrane-spanning segment. The Cytoplasmic portion of the chain corresponds to 41–51 (RGQRSRHIDLP). The chain crosses the membrane as a helical span at residues 52–71 (IGLLSLIHLVMLIAMSLVAT). The Extracellular portion of the chain corresponds to 72–90 (DIFMPWGRWGDTTCKCVIS). The cysteines at positions 85 and 172 are disulfide-linked. The chain crosses the membrane as a helical span at residues 91-112 (LYRFCRSLSLCATSLLSILQAV). Over 113–132 (TLNPRNSCLEKFKRKSPHYM) the chain is Cytoplasmic. The chain crosses the membrane as a helical span at residues 133 to 154 (LGCLLFLSVFYTFISSPLATYI). Topologically, residues 155–193 (TAKSNLTSPSFTYITTSCSLAPMSYSFHLTVFILLTSRD) are extracellular. A helical transmembrane segment spans residues 194–212 (VIFVGLMLLSSGYMVTFLG). Residues 213–239 (RHKKQSQFLHITSFSLKPSAEKRAMRT) are Cytoplasmic-facing. Residues 240–260 (ILCLMSFFVLMYTLDSIVSYI) traverse the membrane as a helical segment. The Extracellular segment spans residues 261–267 (RSIDDGQ). The chain crosses the membrane as a helical span at residues 268–288 (IFYCVHIFTAHGYATVSPFLI). Residues 289 to 315 (LSTEKYIINIFRSTFGRMVTIILLRNR) are Cytoplasmic-facing.

The protein belongs to the G-protein coupled receptor 1 family.

Its subcellular location is the cell membrane. Its function is as follows. Putative pheromone receptor implicated in the regulation of social and reproductive behavior. This Mus musculus (Mouse) protein is Vomeronasal type-1 receptor 54 (Vmn1r54).